Consider the following 302-residue polypeptide: Ribosomal RNA small subunit methyltransferase A (302 aa).

H15, L17, G42, E64, D89, and N109 together coordinate S-adenosyl-L-methionine. A disordered region spans residues 275 to 302; it reads DAASADGHDHGDGSGQGESSPGGARDQI.

The protein belongs to the class I-like SAM-binding methyltransferase superfamily. rRNA adenine N(6)-methyltransferase family. RsmA subfamily.

It is found in the cytoplasm. It catalyses the reaction adenosine(1518)/adenosine(1519) in 16S rRNA + 4 S-adenosyl-L-methionine = N(6)-dimethyladenosine(1518)/N(6)-dimethyladenosine(1519) in 16S rRNA + 4 S-adenosyl-L-homocysteine + 4 H(+). Specifically dimethylates two adjacent adenosines (A1518 and A1519) in the loop of a conserved hairpin near the 3'-end of 16S rRNA in the 30S particle. May play a critical role in biogenesis of 30S subunits. This Parasynechococcus marenigrum (strain WH8102) protein is Ribosomal RNA small subunit methyltransferase A.